Reading from the N-terminus, the 160-residue chain is Cytochrome b6-f complex subunit 4 (160 aa).

A run of 3 helical transmembrane segments spans residues Leu-36–Val-56, Leu-95–Glu-115, and Ala-131–Ile-151.

This sequence belongs to the cytochrome b family. PetD subfamily. As to quaternary structure, the 4 large subunits of the cytochrome b6-f complex are cytochrome b6, subunit IV (17 kDa polypeptide, PetD), cytochrome f and the Rieske protein, while the 4 small subunits are PetG, PetL, PetM and PetN. The complex functions as a dimer.

Its subcellular location is the cellular thylakoid membrane. Its function is as follows. Component of the cytochrome b6-f complex, which mediates electron transfer between photosystem II (PSII) and photosystem I (PSI), cyclic electron flow around PSI, and state transitions. The sequence is that of Cytochrome b6-f complex subunit 4 from Synechococcus elongatus (strain ATCC 33912 / PCC 7942 / FACHB-805) (Anacystis nidulans R2).